We begin with the raw amino-acid sequence, 115 residues long: UPF0102 protein Swol_1475 (115 aa).

The protein belongs to the UPF0102 family.

The protein is UPF0102 protein Swol_1475 of Syntrophomonas wolfei subsp. wolfei (strain DSM 2245B / Goettingen).